A 159-amino-acid chain; its full sequence is 4-deoxy-4-sulfo-D-erythrose isomerase (159 aa).

Cysteine 66 acts as the Proton acceptor in catalysis.

It belongs to the LacAB/RpiB family.

The enzyme catalyses 4-deoxy-4-sulfo-D-erythrose = 4-deoxy-4-sulfo-D-erythrulose. In terms of biological role, part of the sulfo-TK pathway, a D-sulfoquinovose degradation pathway that produces 2-hydroxyethane-1-sulfonate (isethionate). Catalyzes the isomerization of 4-deoxy-4-sulfo-D-erythrose (SE) to 4-deoxy-4-sulfo-D-erythrulose (SEu). This Clostridium sp. (strain MSTE9) protein is 4-deoxy-4-sulfo-D-erythrose isomerase.